The primary structure comprises 303 residues: N-acetyl-D-glucosamine kinase (303 aa).

ATP-binding positions include Gly-4 to Lys-11 and Gly-133 to Phe-140. Residues His-157, Cys-177, Cys-179, and Cys-184 each contribute to the Zn(2+) site.

Belongs to the ROK (NagC/XylR) family. NagK subfamily.

It catalyses the reaction N-acetyl-D-glucosamine + ATP = N-acetyl-D-glucosamine 6-phosphate + ADP + H(+). It participates in cell wall biogenesis; peptidoglycan recycling. Catalyzes the phosphorylation of N-acetyl-D-glucosamine (GlcNAc) derived from cell-wall degradation, yielding GlcNAc-6-P. The sequence is that of N-acetyl-D-glucosamine kinase from Escherichia coli O139:H28 (strain E24377A / ETEC).